The chain runs to 337 residues: Glucokinase (337 aa).

11–16 (ADIGGT) contacts ATP.

This sequence belongs to the bacterial glucokinase family.

The protein resides in the cytoplasm. The catalysed reaction is D-glucose + ATP = D-glucose 6-phosphate + ADP + H(+). In Xylella fastidiosa (strain 9a5c), this protein is Glucokinase.